The chain runs to 572 residues: Urease subunit alpha (572 aa).

The Urease domain occupies 134–572 (AGIDTHIHLI…AAMNQLYFFG (439 aa)). Ni(2+) contacts are provided by His139, His141, and Lys222. Lys222 carries the post-translational modification N6-carboxylysine. A substrate-binding site is contributed by His224. His251 and His277 together coordinate Ni(2+). Residue His325 is the Proton donor of the active site. Asp365 contacts Ni(2+).

This sequence belongs to the metallo-dependent hydrolases superfamily. Urease alpha subunit family. Heterotrimer of UreA (gamma), UreB (beta) and UreC (alpha) subunits. Three heterotrimers associate to form the active enzyme. Requires Ni cation as cofactor. Post-translationally, carboxylation allows a single lysine to coordinate two nickel ions.

Its subcellular location is the cytoplasm. It catalyses the reaction urea + 2 H2O + H(+) = hydrogencarbonate + 2 NH4(+). The protein operates within nitrogen metabolism; urea degradation; CO(2) and NH(3) from urea (urease route): step 1/1. This is Urease subunit alpha from Edwardsiella ictaluri (strain 93-146).